Here is a 473-residue protein sequence, read N- to C-terminus: Photosystem II CP43 reaction center protein (473 aa).

Residues 1-14 (MKTLYSLRRSYPVE) constitute a propeptide that is removed on maturation. N-acetylthreonine is present on threonine 15. Residue threonine 15 is modified to Phosphothreonine. 5 consecutive transmembrane segments (helical) span residues 69 to 93 (LFEVAHFVPEKPMYEQGLILLPHLA), 134 to 155 (LIGPETLEESFPFFGYVWKDKN), 178 to 200 (KALYFGGLYDTWAPGGGDVRKIT), 255 to 275 (KPFAWARRAFVWSGEAYLSYS), and 291 to 312 (WFNNTAYPSEFYGPTGPEASQA). Glutamate 367 contacts [CaMn4O5] cluster. A helical transmembrane segment spans residues 447-471 (RARAAAAGFEKGIDRDTEPVLFMNP).

It belongs to the PsbB/PsbC family. PsbC subfamily. PSII is composed of 1 copy each of membrane proteins PsbA, PsbB, PsbC, PsbD, PsbE, PsbF, PsbH, PsbI, PsbJ, PsbK, PsbL, PsbM, PsbT, PsbX, PsbY, PsbZ, Psb30/Ycf12, at least 3 peripheral proteins of the oxygen-evolving complex and a large number of cofactors. It forms dimeric complexes. Binds multiple chlorophylls and provides some of the ligands for the Ca-4Mn-5O cluster of the oxygen-evolving complex. It may also provide a ligand for a Cl- that is required for oxygen evolution. PSII binds additional chlorophylls, carotenoids and specific lipids. is required as a cofactor.

It is found in the plastid. The protein resides in the chloroplast thylakoid membrane. Its function is as follows. One of the components of the core complex of photosystem II (PSII). It binds chlorophyll and helps catalyze the primary light-induced photochemical processes of PSII. PSII is a light-driven water:plastoquinone oxidoreductase, using light energy to abstract electrons from H(2)O, generating O(2) and a proton gradient subsequently used for ATP formation. The polypeptide is Photosystem II CP43 reaction center protein (Zygnema circumcarinatum (Green alga)).